A 426-amino-acid chain; its full sequence is MVRLITYPSIDADNYLQKKTLDDANVSVQVAQVLETIRCRGVEAVFEYTKRFDGATVNEANFRVSEAEIDEAYSKVDPEVLAALRRARDNIRRYHEKQLRPSWIEPEADGTMLGQLIRPLERVGTYVPGGLASYPSSVLMNAVPAKVAGVPQVVMATPPGKDGSINPYTLVAAREAGVDEIYRMGGAQAVAAMAYGAGLKAVDKITGPGNIYVTLAKKQVYGTVDIDMLAGPSEILVIADETAPPAYVAADFLSQVEHDVRAAAVLVTPSEILARAVEGEIQRQMDYLPRREIMEQALKDNSAVIVVKDLDEACEVANRYAPEHLEVLTKEPFALLGKLTQAGAIFLGPYSPEPVGDYYAGPNHVLPTGGTARFYSPLNVDTFMKKTSVIAYSKARFEQAADDILALAKCEGLDAHANAVAVRIEK.

NAD(+) is bound by residues tyrosine 126, glutamine 188, and asparagine 210. Residues serine 233, glutamine 255, and histidine 258 each contribute to the substrate site. Positions 255 and 258 each coordinate Zn(2+). Active-site proton acceptor residues include glutamate 323 and histidine 324. The substrate site is built by histidine 324, aspartate 357, glutamate 411, and histidine 416. Aspartate 357 is a Zn(2+) binding site. Position 416 (histidine 416) interacts with Zn(2+).

It belongs to the histidinol dehydrogenase family. Requires Zn(2+) as cofactor.

The enzyme catalyses L-histidinol + 2 NAD(+) + H2O = L-histidine + 2 NADH + 3 H(+). It functions in the pathway amino-acid biosynthesis; L-histidine biosynthesis; L-histidine from 5-phospho-alpha-D-ribose 1-diphosphate: step 9/9. Catalyzes the sequential NAD-dependent oxidations of L-histidinol to L-histidinaldehyde and then to L-histidine. In Heliobacterium mobile (Heliobacillus mobilis), this protein is Histidinol dehydrogenase.